The sequence spans 961 residues: Glycine dehydrogenase (decarboxylating) (961 aa).

An N6-(pyridoxal phosphate)lysine modification is found at Lys-709.

This sequence belongs to the GcvP family. As to quaternary structure, the glycine cleavage system is composed of four proteins: P, T, L and H. Pyridoxal 5'-phosphate is required as a cofactor.

It catalyses the reaction N(6)-[(R)-lipoyl]-L-lysyl-[glycine-cleavage complex H protein] + glycine + H(+) = N(6)-[(R)-S(8)-aminomethyldihydrolipoyl]-L-lysyl-[glycine-cleavage complex H protein] + CO2. Functionally, the glycine cleavage system catalyzes the degradation of glycine. The P protein binds the alpha-amino group of glycine through its pyridoxal phosphate cofactor; CO(2) is released and the remaining methylamine moiety is then transferred to the lipoamide cofactor of the H protein. The polypeptide is Glycine dehydrogenase (decarboxylating) (Streptomyces griseus subsp. griseus (strain JCM 4626 / CBS 651.72 / NBRC 13350 / KCC S-0626 / ISP 5235)).